The sequence spans 261 residues: SURF1-like protein (261 aa).

The next 2 helical transmembrane spans lie at 17–37 (LYWALLSVPVVTFGLGTWQIF) and 223–243 (LSYIITWYSISAITLAMWVFL).

It belongs to the SURF1 family.

The protein resides in the mitochondrion inner membrane. Its function is as follows. Probably involved in the biogenesis of the COX complex. This chain is SURF1-like protein, found in Monosiga brevicollis (Choanoflagellate).